Reading from the N-terminus, the 439-residue chain is C4-dicarboxylate transport protein (439 aa).

9 consecutive transmembrane segments (helical) span residues 9 to 29 (SLYA…HFLP), 45 to 65 (LIKM…IAGM), 77 to 97 (LALL…LIIV), 145 to 165 (AFAK…GFAL), 185 to 205 (VLFT…FGAM), 223 to 243 (LMGA…GIVT), 290 to 310 (VVGL…AIYL), 332 to 352 (TLLA…GSGF), and 353 to 373 (IVLA…LALI). The segment at 417–439 (NESPQAADQPEKILDQTNTKLGA) is disordered.

This sequence belongs to the dicarboxylate/amino acid:cation symporter (DAACS) (TC 2.A.23) family.

The protein resides in the cell inner membrane. Functionally, responsible for the transport of dicarboxylates such as succinate, fumarate, and malate from the periplasm across the membrane. This is C4-dicarboxylate transport protein from Janthinobacterium sp. (strain Marseille) (Minibacterium massiliensis).